The primary structure comprises 103 residues: Large ribosomal subunit protein bL21 (103 aa).

This sequence belongs to the bacterial ribosomal protein bL21 family. In terms of assembly, part of the 50S ribosomal subunit. Contacts protein L20.

Functionally, this protein binds to 23S rRNA in the presence of protein L20. This is Large ribosomal subunit protein bL21 from Vibrio cholerae serotype O1 (strain ATCC 39541 / Classical Ogawa 395 / O395).